The sequence spans 527 residues: Eukaryotic translation initiation factor 2 subunit gamma (527 aa).

Residues 1–83 (MSDLQDQEPS…GLPEQPLNPD (83 aa)) are disordered. Phosphothreonine is present on T60. One can recognise a tr-type G domain in the interval 98 to 307 (QATINIGTIG…IVKTIPVPPR (210 aa)). Positions 107-114 (GHVAHGKS) are G1. A GTP-binding site is contributed by 110 to 115 (AHGKST). Positions 135–139 (NITIK) are G2. Positions 193–196 (DCPG) are G3. 249–252 (NKVD) contacts GTP. Residues 249–252 (NKVD) are G4. S258 bears the Phosphoserine mark. 284–286 (SAQ) contributes to the GTP binding site. The segment at 284-286 (SAQ) is G5. The tract at residues 515-527 (ATIKKGTTLEPIA) is interacts with CDC123.

This sequence belongs to the TRAFAC class translation factor GTPase superfamily. Classic translation factor GTPase family. EIF2G subfamily. As to quaternary structure, eukaryotic translation initiation factor 2 eIF2 is a heterotrimeric complex composed of an alpha, a beta and a gamma subunit. The factors eIF-1, eIF-1A, eIF-2, eIF-3, TIF5/eIF-5 and methionyl-tRNAi form a multifactor complex (MFC) that may bind to the 40S ribosome. Interacts (via C-terminus) with CDC123; the interaction is direct. Interacts with GCD1. Interacts with the eIF2B complex subunits GCD6 and GCD7. Interacts with methionyl-initiator methionine tRNA.

The protein localises to the cytoplasm. The protein resides in the cytosol. The catalysed reaction is GTP + H2O = GDP + phosphate + H(+). Functionally, as a subunit of eukaryotic initiation factor 2 eIF2, involved in the early steps of protein synthesis. In the presence of GTP, eIF-2 forms a ternary complex with initiator tRNA Met-tRNAi and then recruits the 40S ribosomal complex and initiation factors eIF-1, eIF-1A and eIF-3 to form the 43S pre-initiation complex (43S PIC), a step that determines the rate of protein translation. The 43S PIC binds to mRNA and scans downstream to the initiation codon, where it forms a 48S initiation complex by codon-anticodon base pairing. This leads to the displacement of eIF-1 to allow GTPase-activating protein (GAP) eIF-5-mediated hydrolysis of eIF2-bound GTP. Hydrolysis of GTP and release of Pi, which makes GTP hydrolysis irreversible, causes the release of the eIF-2-GDP binary complex from the 40S subunit, an event that is essential for the subsequent joining of the 60S ribosomal subunit to form an elongation-competent 80S ribosome. In order for eIF-2 to recycle and catalyze another round of initiation, the GDP bound to eIF-2 must be exchanged with GTP by way of a reaction catalyzed by GDP-GTP exchange factor (GEF) eIF-2B. This is Eukaryotic translation initiation factor 2 subunit gamma (GCD11) from Saccharomyces cerevisiae (strain ATCC 204508 / S288c) (Baker's yeast).